Here is a 356-residue protein sequence, read N- to C-terminus: MSLFASLTDAAYALARPLVHATDGEAAHNLTLAALQPLPRARHALTSPMLATELAGLRFPNPVGLAPGFDKDARVAHAMPHFGFGFVEVGTLTPLPQEGNPRPRLFRLVEDRAIINRMGFNNGGQVAAAERIACLRRHGLPVPLGINIGANKDSADRIADYAKGTAAMAPLADYLTVNISSPNTPGLRALQDRGALEALLDGVAAAQPAGAAKPVFLKVAPDLEPADIDDIVAVALDRGLAAVIVSNTTVARPPLASRHAVEAGGLSGAPLAQLALQCVQDFRAASGGRLPLIAAGGIASAEQAWERIRAGASLVQVYSAMVFEGPGLASRIARGLETLAARDGFARVSDAVGAGA.

FMN-binding positions include 67 to 71 (PGFDK) and threonine 91. Lysine 71 lines the substrate pocket. Residue 116–120 (NRMGF) participates in substrate binding. Residues asparagine 147 and asparagine 178 each coordinate FMN. Asparagine 178 contributes to the substrate binding site. Serine 181 (nucleophile) is an active-site residue. Asparagine 183 serves as a coordination point for substrate. FMN contacts are provided by lysine 218 and serine 246. Residue 247–248 (NT) participates in substrate binding. Residues glycine 268, glycine 297, and 318 to 319 (YS) contribute to the FMN site.

It belongs to the dihydroorotate dehydrogenase family. Type 2 subfamily. As to quaternary structure, monomer. FMN serves as cofactor.

Its subcellular location is the cell membrane. It catalyses the reaction (S)-dihydroorotate + a quinone = orotate + a quinol. It functions in the pathway pyrimidine metabolism; UMP biosynthesis via de novo pathway; orotate from (S)-dihydroorotate (quinone route): step 1/1. Functionally, catalyzes the conversion of dihydroorotate to orotate with quinone as electron acceptor. In Sphingopyxis alaskensis (strain DSM 13593 / LMG 18877 / RB2256) (Sphingomonas alaskensis), this protein is Dihydroorotate dehydrogenase (quinone).